A 227-amino-acid polypeptide reads, in one-letter code: Cytochrome c oxidase subunit 2 (227 aa).

Residues 1–14 lie on the Mitochondrial intermembrane side of the membrane; the sequence is MPYPLQLGFQDATS. A helical membrane pass occupies residues 15-45; sequence PIMEELLHFHDHTLMIVFLISSLVLYIITLM. At 46–59 the chain is on the mitochondrial matrix side; that stretch reads LTTKLTHTSTMDAQ. A helical membrane pass occupies residues 60-87; the sequence is EVETVWTILPAVILILIALPSLRILYMM. At 88–227 the chain is on the mitochondrial intermembrane side; the sequence is DEINNPLLTI…HFEDWSTSML (140 aa). Positions 161, 196, 198, 200, 204, and 207 each coordinate Cu cation. Mg(2+) is bound at residue glutamate 198.

It belongs to the cytochrome c oxidase subunit 2 family. As to quaternary structure, component of the cytochrome c oxidase (complex IV, CIV), a multisubunit enzyme composed of 14 subunits. The complex is composed of a catalytic core of 3 subunits MT-CO1, MT-CO2 and MT-CO3, encoded in the mitochondrial DNA, and 11 supernumerary subunits COX4I, COX5A, COX5B, COX6A, COX6B, COX6C, COX7A, COX7B, COX7C, COX8 and NDUFA4, which are encoded in the nuclear genome. The complex exists as a monomer or a dimer and forms supercomplexes (SCs) in the inner mitochondrial membrane with NADH-ubiquinone oxidoreductase (complex I, CI) and ubiquinol-cytochrome c oxidoreductase (cytochrome b-c1 complex, complex III, CIII), resulting in different assemblies (supercomplex SCI(1)III(2)IV(1) and megacomplex MCI(2)III(2)IV(2)). Found in a complex with TMEM177, COA6, COX18, COX20, SCO1 and SCO2. Interacts with TMEM177 in a COX20-dependent manner. Interacts with COX20. Interacts with COX16. Cu cation is required as a cofactor.

It is found in the mitochondrion inner membrane. It catalyses the reaction 4 Fe(II)-[cytochrome c] + O2 + 8 H(+)(in) = 4 Fe(III)-[cytochrome c] + 2 H2O + 4 H(+)(out). Functionally, component of the cytochrome c oxidase, the last enzyme in the mitochondrial electron transport chain which drives oxidative phosphorylation. The respiratory chain contains 3 multisubunit complexes succinate dehydrogenase (complex II, CII), ubiquinol-cytochrome c oxidoreductase (cytochrome b-c1 complex, complex III, CIII) and cytochrome c oxidase (complex IV, CIV), that cooperate to transfer electrons derived from NADH and succinate to molecular oxygen, creating an electrochemical gradient over the inner membrane that drives transmembrane transport and the ATP synthase. Cytochrome c oxidase is the component of the respiratory chain that catalyzes the reduction of oxygen to water. Electrons originating from reduced cytochrome c in the intermembrane space (IMS) are transferred via the dinuclear copper A center (CU(A)) of subunit 2 and heme A of subunit 1 to the active site in subunit 1, a binuclear center (BNC) formed by heme A3 and copper B (CU(B)). The BNC reduces molecular oxygen to 2 water molecules using 4 electrons from cytochrome c in the IMS and 4 protons from the mitochondrial matrix. This Dasypus novemcinctus (Nine-banded armadillo) protein is Cytochrome c oxidase subunit 2 (MT-CO2).